The primary structure comprises 1647 residues: Cortactin-binding protein 2 (1647 aa).

Disordered regions lie at residues 1 to 27, 202 to 222, 318 to 427, 440 to 468, and 482 to 604; these read MATDGASCEPDASRAPEEAAGATAEAA, EKKKTNELEEELSAEKRRSTE, HVKK…QPGL, GNANDPDQNGNTTQSPPSRDVSPTSRDNL, and LSRF…PSID. The stretch at 120-276 forms a coiled coil; it reads KMQERMATQL…EQLKRGSDSK (157 aa). Residues 362–372 show a composition bias toward low complexity; that stretch reads SSAPSLPPASA. Over residues 379–388 the composition is skewed to polar residues; sequence GPSTGSTADL. Residues 389–411 are compositionally biased toward low complexity; that stretch reads PSSTAPAPGSAAQSPVAAALGPA. Polar residues predominate over residues 440–466; the sequence is GNANDPDQNGNTTQSPPSRDVSPTSRD. Arginine 484 bears the Asymmetric dimethylarginine mark. A compositionally biased stretch (low complexity) spans 488–509; sequence PAVGAAPRPGAPPTGDAGAYPP. The segment covering 569 to 579 has biased composition (polar residues); the sequence is TVASPPSSLPQ. ANK repeat units lie at residues 695-725, 729-758, 762-791, 795-824, and 828-857; these read GRPTLLQQAAAQGNVTLLSMLLNEEGLDINY, DGHSALYSAAKNGHTDCVRLLLNAEAQVNA, NGFTPLCAAAAQGHFECVELLIAYDANINH, GGQTPLYLACKNGNKECIKLLLEAGTDRSV, and DGWTPVHAAVDTGNVDSLKLLMYHRAPAHG. Positions 856–886 are disordered; sequence HGNSLNEEEPESDVSDLDDGEESSEGESKPV. Acidic residues predominate over residues 861–880; it reads NEEEPESDVSDLDDGEESSE. The stretch at 898–928 is one ANK 6 repeat; that stretch reads EGWTAAHIAASKGFKNCLEILCRHRGLEPER. The tract at residues 1436 to 1467 is disordered; the sequence is ENGAWRKVNTSPRRKSGRFSSPTWNKPDLSNE. Residue serine 1509 is modified to Phosphoserine. The tract at residues 1542 to 1647 is disordered; that stretch reads RTFDSSGNNP…HKNEQTHRKT (106 aa). Polar residues-rich tracts occupy residues 1544-1559 and 1567-1584; these read FDSSGNNPAFSATVNN and KEVSPLSSHQTTECSNNK. Over residues 1609-1623 the composition is skewed to low complexity; that stretch reads SQNTKRSSSSSNTRQ. Residues 1630–1647 show a composition bias toward basic and acidic residues; the sequence is SKEENWNLHKNEQTHRKT.

In terms of assembly, interacts with CTTN/cortactin SH3 domain. Interacts with STRN, STRN4/zinedin and MOB4/phocein; this interactions mediate the association with the STRIPAK core complex and may regulate dendritic spine distribution of the STRIPAK complex in hippocampal neurons. Activation of glutamate receptors weakens the interaction with STRN and STRN4.

Its subcellular location is the cytoplasm. The protein localises to the cell cortex. It is found in the cell projection. It localises to the dendritic spine. In terms of biological role, regulates the dendritic spine distribution of CTTN/cortactin in hippocampal neurons, and thus controls dendritic spinogenesis and dendritic spine maintenance. Associates with the striatin-interacting phosphatase and kinase (STRIPAK) core complex to regulate dendritic spine distribution of the STRIPAK complex in hippocampal neurons. The protein is Cortactin-binding protein 2 (CTTNBP2) of Microcebus murinus (Gray mouse lemur).